The following is a 259-amino-acid chain: tRNA (guanine-N(1)-)-methyltransferase (259 aa).

Residues Gly-113 and 133–138 each bind S-adenosyl-L-methionine; that span reads IGDYVL.

It belongs to the RNA methyltransferase TrmD family. As to quaternary structure, homodimer.

The protein localises to the cytoplasm. It carries out the reaction guanosine(37) in tRNA + S-adenosyl-L-methionine = N(1)-methylguanosine(37) in tRNA + S-adenosyl-L-homocysteine + H(+). In terms of biological role, specifically methylates guanosine-37 in various tRNAs. The protein is tRNA (guanine-N(1)-)-methyltransferase of Xanthomonas oryzae pv. oryzae (strain MAFF 311018).